The following is a 125-amino-acid chain: Holo-[acyl-carrier-protein] synthase (125 aa).

Mg(2+) contacts are provided by aspartate 8 and glutamate 57.

The protein belongs to the P-Pant transferase superfamily. AcpS family. Requires Mg(2+) as cofactor.

It is found in the cytoplasm. The enzyme catalyses apo-[ACP] + CoA = holo-[ACP] + adenosine 3',5'-bisphosphate + H(+). Transfers the 4'-phosphopantetheine moiety from coenzyme A to a Ser of acyl-carrier-protein. The protein is Holo-[acyl-carrier-protein] synthase of Dechloromonas aromatica (strain RCB).